The chain runs to 390 residues: Bifunctional enzyme IspD/IspF (390 aa).

The 2-C-methyl-D-erythritol 4-phosphate cytidylyltransferase stretch occupies residues 1 to 229; sequence MAAGRGERAG…RQDHAVFPDI (229 aa). Positions 230-390 are 2-C-methyl-D-erythritol 2,4-cyclodiphosphate synthase; sequence RTGNGYDVHS…TVIYPGEVPE (161 aa). Asp236 and His238 together coordinate a divalent metal cation. 4-CDP-2-C-methyl-D-erythritol 2-phosphate is bound by residues 236 to 238 and 262 to 263; these read DVH and HS. An a divalent metal cation-binding site is contributed by His270. 4-CDP-2-C-methyl-D-erythritol 2-phosphate is bound by residues 284–286, 360–363, Phe367, and Arg370; these read DIG and TTNE.

In the N-terminal section; belongs to the IspD/TarI cytidylyltransferase family. IspD subfamily. The protein in the C-terminal section; belongs to the IspF family. A divalent metal cation is required as a cofactor.

It catalyses the reaction 2-C-methyl-D-erythritol 4-phosphate + CTP + H(+) = 4-CDP-2-C-methyl-D-erythritol + diphosphate. It carries out the reaction 4-CDP-2-C-methyl-D-erythritol 2-phosphate = 2-C-methyl-D-erythritol 2,4-cyclic diphosphate + CMP. It participates in isoprenoid biosynthesis; isopentenyl diphosphate biosynthesis via DXP pathway; isopentenyl diphosphate from 1-deoxy-D-xylulose 5-phosphate: step 2/6. Its pathway is isoprenoid biosynthesis; isopentenyl diphosphate biosynthesis via DXP pathway; isopentenyl diphosphate from 1-deoxy-D-xylulose 5-phosphate: step 4/6. In terms of biological role, bifunctional enzyme that catalyzes the formation of 4-diphosphocytidyl-2-C-methyl-D-erythritol from CTP and 2-C-methyl-D-erythritol 4-phosphate (MEP) (IspD), and catalyzes the conversion of 4-diphosphocytidyl-2-C-methyl-D-erythritol 2-phosphate (CDP-ME2P) to 2-C-methyl-D-erythritol 2,4-cyclodiphosphate (ME-CPP) with a corresponding release of cytidine 5-monophosphate (CMP) (IspF). The polypeptide is Bifunctional enzyme IspD/IspF (Brucella suis biovar 1 (strain 1330)).